Consider the following 532-residue polypeptide: Probable cytochrome c oxidase subunit 1 (532 aa).

Helical transmembrane passes span 33 to 53, 74 to 94, 95 to 115, 118 to 138, 163 to 183, 200 to 220, 252 to 272, and 284 to 304; these read IMYI…SLLF, VLIT…ALFG, GFGN…FPRL, ISFW…FVDG, MAIF…INLI, PLFV…MPVL, LFWF…FGIV, and IFGY…GFIV. His-79 contributes to the Fe(II)-heme a binding site. Residues His-258 and Tyr-262 each contribute to the Cu cation site. The Cu cation site is built by His-307 and His-308. 2 consecutive transmembrane segments (helical) span residues 318–338 and 355–375; these read ALIY…IKIF and MLFS…GIIL. Residue His-393 participates in heme a3 binding. 3 consecutive transmembrane segments (helical) span residues 394–414, 431–451, and 473–493; these read FHYT…YYWF, FWIT…LGLA, and IGAG…FYTL. Fe(II)-heme a is bound at residue His-395.

This sequence belongs to the heme-copper respiratory oxidase family.

The protein resides in the cell membrane. The catalysed reaction is 4 Fe(II)-[cytochrome c] + O2 + 8 H(+)(in) = 4 Fe(III)-[cytochrome c] + 2 H2O + 4 H(+)(out). It participates in energy metabolism; oxidative phosphorylation. Cytochrome c oxidase is the component of the respiratory chain that catalyzes the reduction of oxygen to water. Subunits 1-3 form the functional core of the enzyme complex. CO I is the catalytic subunit of the enzyme. Electrons originating in cytochrome c are transferred via the copper A center of subunit 2 and heme A of subunit 1 to the bimetallic center formed by heme A3 and copper B. The polypeptide is Probable cytochrome c oxidase subunit 1 (ctaD) (Rickettsia conorii (strain ATCC VR-613 / Malish 7)).